A 471-amino-acid chain; its full sequence is Arginine biosynthesis bifunctional protein ArgJ, mitochondrial (471 aa).

Residues 1-33 (MAMAGCNGFFLHQLRQPRLQLARQLGRTPSRAY) constitute a mitochondrion transit peptide. Residues threonine 201, lysine 230, threonine 241, glutamate 327, asparagine 466, and threonine 471 each contribute to the substrate site. The active-site Nucleophile is the threonine 241.

It belongs to the ArgJ family. As to quaternary structure, heterodimer of an alpha and a beta chain. In terms of processing, the alpha and beta chains are autoproteolytically processed from a single precursor protein within the mitochondrion.

The protein resides in the mitochondrion matrix. The catalysed reaction is N(2)-acetyl-L-ornithine + L-glutamate = N-acetyl-L-glutamate + L-ornithine. It catalyses the reaction L-glutamate + acetyl-CoA = N-acetyl-L-glutamate + CoA + H(+). Its pathway is amino-acid biosynthesis; L-arginine biosynthesis; L-ornithine and N-acetyl-L-glutamate from L-glutamate and N(2)-acetyl-L-ornithine (cyclic): step 1/1. It functions in the pathway amino-acid biosynthesis; L-arginine biosynthesis; N(2)-acetyl-L-ornithine from L-glutamate: step 1/4. Catalyzes two activities which are involved in the cyclic version of arginine biosynthesis: the synthesis of acetylglutamate from glutamate and acetyl-CoA, and of ornithine by transacetylation between acetylornithine and glutamate. The protein is Arginine biosynthesis bifunctional protein ArgJ, mitochondrial of Chaetomium globosum (strain ATCC 6205 / CBS 148.51 / DSM 1962 / NBRC 6347 / NRRL 1970) (Soil fungus).